The primary structure comprises 205 residues: Holliday junction branch migration complex subunit RuvA (205 aa).

The segment at 1–64 (MIGKLKGILE…EEAIRLFGFV (64 aa)) is domain I. The domain II stretch occupies residues 65 to 143 (AKAEQEWFCL…PFNDNALHFT (79 aa)). The segment at 144-149 (PQPHLE) is flexible linker. Residues 150–205 (VTHQPTNDALSALVKLGFERDQAARALALAMNALEGETVSSALLIRHSLKLLSPST) form a domain III region.

The protein belongs to the RuvA family. Homotetramer. Forms an RuvA(8)-RuvB(12)-Holliday junction (HJ) complex. HJ DNA is sandwiched between 2 RuvA tetramers; dsDNA enters through RuvA and exits via RuvB. An RuvB hexamer assembles on each DNA strand where it exits the tetramer. Each RuvB hexamer is contacted by two RuvA subunits (via domain III) on 2 adjacent RuvB subunits; this complex drives branch migration. In the full resolvosome a probable DNA-RuvA(4)-RuvB(12)-RuvC(2) complex forms which resolves the HJ.

The protein localises to the cytoplasm. In terms of biological role, the RuvA-RuvB-RuvC complex processes Holliday junction (HJ) DNA during genetic recombination and DNA repair, while the RuvA-RuvB complex plays an important role in the rescue of blocked DNA replication forks via replication fork reversal (RFR). RuvA specifically binds to HJ cruciform DNA, conferring on it an open structure. The RuvB hexamer acts as an ATP-dependent pump, pulling dsDNA into and through the RuvAB complex. HJ branch migration allows RuvC to scan DNA until it finds its consensus sequence, where it cleaves and resolves the cruciform DNA. The chain is Holliday junction branch migration complex subunit RuvA from Bartonella quintana (strain Toulouse) (Rochalimaea quintana).